The chain runs to 374 residues: 2-oxoglutarate-Fe(II) type oxidoreductase ppzC (374 aa).

The tract at residues 111-131 is disordered; sequence KKGPFDSGYRGPGTQRVNPDE. The region spanning 220-330 is the Fe2OG dioxygenase domain; the sequence is YPDASLEINF…RVSMPFFWGF (111 aa). Positions 254, 256, and 311 each coordinate Fe cation. Residue Arg321 participates in 2-oxoglutarate binding.

Belongs to the iron/ascorbate-dependent oxidoreductase family. Fe(2+) is required as a cofactor.

It carries out the reaction peramine + 2-oxoglutarate + O2 = 8-hydroxyperamine + succinate + CO2. The protein operates within secondary metabolite biosynthesis. In terms of biological role, 2-oxoglutarate-Fe(II) type oxidoreductase; part of the gene cluster that mediates the biosynthesis of pyrrolopyrazines, secondary metabolites showing insecticidal activity. Within the pathway, ppzC uses peramine as substrate for hydroxylation to yield the novel analog 8-hydroxyperamine. The single multifunctional NRPS ppzA is sufficient to produce peramine via condensation of 1-pyrroline-5-carboxylate and arginine, N-methylation of the alpha-amino group of arginine and reduction of the thioester and the cyclization to form an iminium ion resulting in release from the peptide synthetase. Deprotonation of this intermediate and oxidation of the pyrroline ring would give rise to peramine. In Epichloe species that produce only peramine, the peramine synthetase gene is not localized in a gene cluster, in contrast to Metarhizium species that contain additional pyrrolopyrazine biosynthesis genes. The 2-oxoglutarate-Fe(II) type oxidoreductase ppzC hydroxylates peramine to yield the newly identified compound 8-hydroxyperamine whereas ppzD converts L-proline into trans-4-hydroxy-L-proline, a precursor of peramine biosynthesis. This chain is 2-oxoglutarate-Fe(II) type oxidoreductase ppzC (ppzC), found in Metarhizium majus (strain ARSEF 297).